The following is a 91-amino-acid chain: Small ribosomal subunit protein uS19 (91 aa).

This sequence belongs to the universal ribosomal protein uS19 family.

In terms of biological role, protein S19 forms a complex with S13 that binds strongly to the 16S ribosomal RNA. This is Small ribosomal subunit protein uS19 from Alcanivorax borkumensis (strain ATCC 700651 / DSM 11573 / NCIMB 13689 / SK2).